Here is a 441-residue protein sequence, read N- to C-terminus: Matrix extracellular phosphoglycoprotein (441 aa).

The first 24 residues, 1–24, serve as a signal peptide directing secretion; it reads MTPEGLMKMQAVSVGLLLFSMTWA. Residue asparagine 82 is glycosylated (N-linked (GlcNAc...) asparagine). Residues 137–441 form a disordered region; the sequence is QSSPVKSKHT…SGSSSESHGD (305 aa). Basic residues predominate over residues 142–156; the sequence is KSKHTKHTRQTRRST. A dentonin region spans residues 178–200; the sequence is PDLLVRGDNDVPPFSGDGQHFMH. Residues 183–185 carry the Cell attachment site motif; the sequence is RGD. O-linked (Xyl...) (chondroitin sulfate) serine glycosylation is present at serine 192. Residues 211–223 show a composition bias toward polar residues; that stretch reads PESSTSRPLSGSS. The span at 313–325 shows a compositional bias: basic and acidic residues; that stretch reads SREKVKGGVEHAG. 2 stretches are compositionally biased toward polar residues: residues 349–358 and 391–405; these read GNQLTLTASQ and GQNN…SQRR. The segment at 424–441 is ASARM motif; interaction with PHEX; sequence RDSSESSSSGSSSESHGD. The segment covering 428-441 has biased composition (low complexity); sequence ESSSSGSSSESHGD.

The protein belongs to the PF07175/osteoregulin family. In terms of assembly, interacts (via ASARM motif) with PHEX; the interaction is zinc-dependent. In terms of processing, phosphorylated on serine residues in the ASARM motif; the phosphorylation is important for the inhibition of bone mineralization. Cleaved by CTSB/cathepsin B; the cleavage is blocked by metalloprotease PHEX. In terms of tissue distribution, expressed in osteocytes (at protein level). Expressed by chondrocytes, specifically in the hypertrophic zone of the bone growth plate (at protein level). Expressed in osteoblasts in bone (at protein level). Expressed by osteoblasts within the metaphysis (at protein level). Expressed at low levels in white fat, brown fat, testes, brain and aorta. Expressed in the craniofacial complex (at protein level). Expressed in odontoblasts, ameloblasts and in predentin during tooth development (at protein level). Expressed in the kidney (at protein level). Expressed in osteocytes in mandibular condylar cartilage and tibial cartilage (at protein level). Expressed in salivary glands.

It is found in the secreted. It localises to the extracellular space. The protein resides in the extracellular matrix. Functionally, regulates renal phosphate and uric acid excretion. Regulates bone mineralization by osteoblasts and cartilage mineralization by chondrocytes. Regulates the mineralization of the extracellular matrix of the craniofacial complex, such as teeth, bone and cartilage. Increases dental pulp stem cell proliferation. In Mus musculus (Mouse), this protein is Matrix extracellular phosphoglycoprotein.